Consider the following 85-residue polypeptide: MCILIVAVLFLTAWTFVMADDPRDEPDTVVRGGKLFSRARDEMNPAASKLNERDCVEVDYFCGIPFVFNGLCCSGNCVFVCTPQG.

The N-terminal stretch at 1–19 (MCILIVAVLFLTAWTFVMA) is a signal peptide. The propeptide occupies 20 to 53 (DDPRDEPDTVVRGGKLFSRARDEMNPAASKLNER). Cystine bridges form between Cys55–Cys73, Cys62–Cys77, and Cys72–Cys81. Gln84 carries the post-translational modification Glutamine amide.

The protein belongs to the conotoxin O1 family. Post-translationally, is not hydroxylated. As to expression, expressed by the venom duct.

It is found in the secreted. In terms of biological role, omega-conotoxins act at presynaptic membranes, they bind and block voltage-gated calcium channels (Cav). The chain is Omega-conotoxin-like Am6.5 from Conus amadis (Amadis cone).